The following is a 955-amino-acid chain: Probable trehalose monomycolate exporter MmpL3 (955 aa).

Topologically, residues 1-13 are cytoplasmic; that stretch reads MFAWWGRTVYRYR. A helical transmembrane segment spans residues 14–34; the sequence is FIVIGITVALCLCGGVFGLSL. Over 35 to 190 the chain is Periplasmic; sequence GKHVTQSGFY…TIATDQRRME (156 aa). Residue 40 to 44 participates in a 1,2-diacylglycero-3-phosphoethanolamine binding; that stretch reads QSGFY. A helical membrane pass occupies residues 191–213; sequence VLALPLVAVVLFLVFGGVIAACL. Over 214 to 219 the chain is Cytoplasmic; the sequence is PVMVGG. A helical transmembrane segment spans residues 220 to 236; sequence LSIAGALGILRFIALFG. Topologically, residues 237 to 244 are periplasmic; the sequence is PVHFFAQP. The helical transmembrane segment at 245–262 threads the bilayer; the sequence is VVSLIGLGIAVDYGLFVV. Topologically, residues 263–291 are cytoplasmic; it reads SRFREEIAEGYDTEAAVRRTVMTAGRTVT. A helical membrane pass occupies residues 292 to 312; that stretch reads FSAVLIAASGASLLLLPQGFV. At 313-319 the chain is on the periplasmic side; sequence KSLTYAL. Residues 320-340 form a helical membrane-spanning segment; it reads IAAVTLAALLSITLLPACLAI. Over 341–401 the chain is Cytoplasmic; it reads LAKHVDALGV…KLVNFVMKRP (61 aa). Residues 402-422 form a helical membrane-spanning segment; that stretch reads LVFAIPIVIGMILLVIPLGNL. Residues 423–567 are Periplasmic-facing; it reads SFGGMSEKYL…HSLVAQAPLM (145 aa). A helical transmembrane segment spans residues 568-588; the sequence is VIMLITTTMLLMFLAFGSFVL. At 589 to 591 the chain is on the cytoplasmic side; the sequence is PIK. Residues 592–612 traverse the membrane as a helical segment; sequence AAVMSALTLGSTMGILTWIFV. Residues 613-621 lie on the Periplasmic side of the membrane; it reads DGHLSKWLN. A helical membrane pass occupies residues 622-642; that stretch reads FTPTPLMVVIIALVVAVGYGL. The Cytoplasmic segment spans residues 643 to 678; it reads ATDYEVFLVSRMVEARAESMSTQEAVRIGTASTGRL. Residues 679-699 form a helical membrane-spanning segment; sequence ITAAALVLAVVAGSFVFSDLV. Over 700-703 the chain is Periplasmic; it reads MMKY. A helical transmembrane segment spans residues 704–724; it reads LAFGLMAALLLDATVVRMFLV. The Cytoplasmic segment spans residues 725-955; the sequence is PSVMKLLGDD…QDLLRREGRL (231 aa). The disordered stretch occupies residues 759 to 955; that stretch reads ERRRPTVSGR…QDLLRREGRL (197 aa). 2 stretches are compositionally biased toward polar residues: residues 821-860 and 890-902; these read GAST…SQGV and NRSS…TAEP.

Belongs to the resistance-nodulation-cell division (RND) (TC 2.A.6) family. MmpL subfamily.

It localises to the cell inner membrane. The protein resides in the cell septum. Its subcellular location is the cell tip. Its function is as follows. Transports trehalose monomycolate (TMM) to the cell wall. Flips TMM across the inner membrane. Membrane potential is not required for this function. Transports probably phosphatidylethanolamine (PE) as well. Contributes to membrane potential, cell wall composition, antibiotic susceptibility and fitness. In Mycobacterium leprae (strain TN), this protein is Probable trehalose monomycolate exporter MmpL3 (mmpL3).